The primary structure comprises 166 residues: Ureidoglycolate lyase (166 aa).

The protein belongs to the ureidoglycolate lyase family. In terms of assembly, homodimer. Requires Ni(2+) as cofactor.

It carries out the reaction (S)-ureidoglycolate = urea + glyoxylate. The protein operates within nitrogen metabolism; (S)-allantoin degradation. Its function is as follows. Catalyzes the catabolism of the allantoin degradation intermediate (S)-ureidoglycolate, generating urea and glyoxylate. Involved in the utilization of allantoin as nitrogen source. The protein is Ureidoglycolate lyase of Azotobacter vinelandii (strain DJ / ATCC BAA-1303).